The chain runs to 495 residues: Non-structural protein 1 (495 aa).

Residues 1–81 form an RNA-binding region; it reads MATFKDACFH…CFLDNEPHLL (81 aa). The tract at residues 42-79 is zinc-binding domain; sequence CLECCQIADLTHCYGCSLPHVCKWCVQNRRCFLDNEPH. The tract at residues 82-177 is important for cytoskeleton localization; the sequence is KLQQLKHPIT…DIYAPYRIVN (96 aa). The tract at residues 320–495 is interaction with host IRF3; it reads DIQYCKWCNI…LISNSEDDNE (176 aa). The pLxIS motif motif lies at 485 to 488; the sequence is LLIS.

The protein belongs to the rotavirus NSP1 family. As to quaternary structure, interacts (via C-terminus) with host IRF3; this interaction leads to IRF3 degradation. Interacts with host IRF7; this interaction leads to IRF7 degradation. Interacts with host CUL1 and CUL3.

The protein resides in the host cytoplasm. It is found in the host cytoskeleton. Functionally, plays a role in the inhibition of host innate immunity by inducing the degradation of key host factors required to activate interferon production such as IRF3, IRF5 or IRF7. Associates with components of cullin RING ligases (CRLs) including CUL1 or CUL3, which are essential multisubunit ubiquitination complexes, to modulate their activities. This Macaca mulatta (Rhesus macaque) protein is Non-structural protein 1.